The primary structure comprises 347 residues: N-acetyl-gamma-glutamyl-phosphate reductase (347 aa).

Residue Cys-152 is part of the active site.

It belongs to the NAGSA dehydrogenase family. Type 1 subfamily.

The protein resides in the cytoplasm. The enzyme catalyses N-acetyl-L-glutamate 5-semialdehyde + phosphate + NADP(+) = N-acetyl-L-glutamyl 5-phosphate + NADPH + H(+). The protein operates within amino-acid biosynthesis; L-arginine biosynthesis; N(2)-acetyl-L-ornithine from L-glutamate: step 3/4. In terms of biological role, catalyzes the NADPH-dependent reduction of N-acetyl-5-glutamyl phosphate to yield N-acetyl-L-glutamate 5-semialdehyde. This is N-acetyl-gamma-glutamyl-phosphate reductase from Neisseria meningitidis serogroup C / serotype 2a (strain ATCC 700532 / DSM 15464 / FAM18).